Reading from the N-terminus, the 324-residue chain is Lactonase drp35 (324 aa).

Ca(2+) is bound by residues Glu-47, Ser-109, Gly-111, Asp-129, Thr-132, Tyr-134, Asp-137, Asn-184, Asp-235, and Ser-236. The active-site Proton donor is the Asp-235.

It belongs to the SMP-30/CGR1 family. Requires Ca(2+) as cofactor.

It localises to the cytoplasm. Its function is as follows. Exhibits lactonase activity. Acts in cells with perturbed membrane integrity and is possibly related to the membrane homeostasis. The chain is Lactonase drp35 (drp35) from Staphylococcus aureus (strain MRSA252).